A 629-amino-acid chain; its full sequence is Histone-lysine N-methyltransferase set9 (629 aa).

In terms of domain architecture, SET spans cysteine 120 to glycine 234. 4 stretches are compositionally biased toward polar residues: residues serine 264–alanine 274, glutamate 338–aspartate 350, asparagine 359–alanine 376, and glutamate 390–proline 400. 2 disordered regions span residues serine 264–proline 400 and valine 586–methionine 629. The span at serine 597–asparagine 614 shows a compositional bias: basic and acidic residues.

Belongs to the class V-like SAM-binding methyltransferase superfamily. Histone-lysine methyltransferase family. Suvar4-20 subfamily.

Its subcellular location is the nucleus. The protein localises to the chromosome. The enzyme catalyses L-lysyl(20)-[histone H4] + 3 S-adenosyl-L-methionine = N(6),N(6),N(6)-trimethyl-L-lysyl(20)-[histone H4] + 3 S-adenosyl-L-homocysteine + 3 H(+). Histone methyltransferase that trimethylates 'Lys-20' of histone H4 to form H4K20me3. The sequence is that of Histone-lysine N-methyltransferase set9 (set9) from Aspergillus terreus (strain NIH 2624 / FGSC A1156).